A 619-amino-acid polypeptide reads, in one-letter code: Transcription factor 7-like 2 (619 aa).

Gly residues predominate over residues 1 to 11 (MPQLNGGGGDD). Residues 1 to 53 (MPQLNGGGGDDLGANDELISFKDEGEQEEKSSENSSAERDLADVKSSLVNESE) form a CTNNB1-binding region. The tract at residues 1–96 (MPQLNGGGGD…AKRQDGGLFK (96 aa)) is disordered. Positions 19 to 43 (ISFKDEGEQEEKSSENSSAERDLAD) are enriched in basic and acidic residues. Residue lysine 22 forms a Glycyl lysine isopeptide (Lys-Gly) (interchain with G-Cter in SUMO2) linkage. The segment covering 47 to 57 (SLVNESETNQN) has biased composition (polar residues). The span at 63-91 (EAERRPPPRSESFRDKSRESLEEAAKRQD) shows a compositional bias: basic and acidic residues. A phosphothreonine; by NLK mark is found at threonine 201 and threonine 212. Positions 201–395 (TPLITYSNEH…RRWHALSREE (195 aa)) are mediates interaction with MAD2L2. Residues 318 to 328 (TVKQESSQSDV) are compositionally biased toward polar residues. Disordered regions lie at residues 318–350 (TVKQ…KPHI), 420–441 (RDNY…TNEH), 496–547 (CLSP…AHLS), and 574–619 (DLPP…KSLE). Residue lysine 320 forms a Glycyl lysine isopeptide (Lys-Gly) (interchain with G-Cter in SUMO) linkage. Residues 335–346 (KHQDSKKEEEKK) are compositionally biased toward basic and acidic residues. The HMG box DNA-binding region spans 350 to 418 (IKKPLNAFML…LHMQLYPGWS (69 aa)). Positions 425 to 430 (KKKKRK) match the Nuclear localization signal motif. Residues 459–505 (SAPKKCRARFGLDQQNNWCGPCRRKKKCVRYIQGEGSCLSPPSSDGS) are promoter-specific activation domain. Residues 496 to 508 (CLSPPSSDGSLLD) show a composition bias toward low complexity. Residue lysine 539 forms a Glycyl lysine isopeptide (Lys-Gly) (interchain with G-Cter in SUMO2) linkage. Positions 574–603 (DLPPAALQPAAPSSSIAQPSTSSLHSHSSL) are enriched in low complexity. The span at 604–619 (AGTQPQPLSLVTKSLE) shows a compositional bias: polar residues.

The protein belongs to the TCF/LEF family. Interacts with TGFB1I1. Interacts with CTNNB1 (via the armadillo repeat); forms stable transcription complex. Interacts with EP300. Interacts with NLK. Interacts with CCDC85B (probably through the HMG box); prevents interaction with CTNNB1. Interacts with TNIK. Interacts with MAD2L2; prevents TCF7L2/TCF4 binding to promZIPK/DAPK3oters, negatively modulating its transcriptional activity. Interacts with ZIPK/DAPK3. Interacts with XIAP/BIRC4 and TLE3. Interacts with DDIT3/CHOP. The CTNNB1 and TCF7L2/TCF4 complex interacts with PML (isoform PML-4). Identified in a complex with CTNNB1 and FERMT2. Interacts with SPIN1. Interacts with C11orf84/SPINDOC in a SPIN1-dependent manner. Interacts with DAZAP2; the interaction results in localization of DAZAP2 to the nucleus. In vitro, phosphorylated by TNIK. Post-translationally, phosphorylated at Thr-201 and/or Thr-212 by NLK. Phosphorylation by NLK at these sites inhibits DNA-binding by TCF7L2/TCF4, thereby preventing transcriptional activation of target genes of the canonical Wnt/beta-catenin signaling pathway. In terms of processing, polysumoylated. Sumoylation is enhanced by PIAS family members and desumoylation is enhanced by SENP2. Sumoylation/desumoylation regulates TCF7L2/TCF4 transcription activity in the Wnt/beta-catenin signaling pathway without altering interaction with CTNNB1 nor binding to DNA. In terms of tissue distribution, detected in epithelium from small intestine, with the highest expression at the top of the crypts and a gradient of expression from crypt to villus. Detected in colon epithelium and colon cancer, and in epithelium from mammary gland and carcinomas derived therefrom.

The protein resides in the nucleus. It localises to the PML body. Functionally, participates in the Wnt signaling pathway and modulates MYC expression by binding to its promoter in a sequence-specific manner. Acts as a repressor in the absence of CTNNB1, and as activator in its presence. Activates transcription from promoters with several copies of the Tcf motif 5'-CCTTTGATC-3' in the presence of CTNNB1. TLE1, TLE2, TLE3 and TLE4 repress transactivation mediated by TCF7L2/TCF4 and CTNNB1. Expression of dominant-negative mutants results in cell-cycle arrest in G1. Necessary for the maintenance of the epithelial stem-cell compartment of the small intestine. The protein is Transcription factor 7-like 2 (TCF7L2) of Homo sapiens (Human).